Here is a 299-residue protein sequence, read N- to C-terminus: Probable lipid kinase YegS (299 aa).

Positions 2–133 (AEFPASLLIL…IDMAQVNKQT (132 aa)) constitute a DAGKc domain. ATP contacts are provided by residues threonine 40, 66 to 72 (GDGTINE), and threonine 95. Mg(2+) contacts are provided by leucine 215, aspartate 218, and leucine 220. Glutamate 271 acts as the Proton acceptor in catalysis.

Belongs to the diacylglycerol/lipid kinase family. YegS lipid kinase subfamily. It depends on Mg(2+) as a cofactor. Requires Ca(2+) as cofactor.

Its subcellular location is the cytoplasm. Its function is as follows. Probably phosphorylates lipids; the in vivo substrate is unknown. This chain is Probable lipid kinase YegS, found in Escherichia coli O45:K1 (strain S88 / ExPEC).